Here is an 807-residue protein sequence, read N- to C-terminus: Ribosome biogenesis protein ERB1 (807 aa).

A disordered region spans residues M1–S112. Composition is skewed to acidic residues over residues E21–D30 and E42–A56. Residue S23 is modified to Phosphoserine. Residues V57–Q69 are compositionally biased toward basic and acidic residues. 2 positions are modified to phosphoserine: S72 and S76. A compositionally biased stretch (acidic residues) spans E86–D102. K127 is covalently cross-linked (Glycyl lysine isopeptide (Lys-Gly) (interchain with G-Cter in ubiquitin)). Residues S146 and S149 each carry the phosphoserine modification. Positions R265–S383 are required for interaction with NOP7. Positions S383–P419 are required for interaction with YTM1. S418 bears the Phosphoserine mark. WD repeat units follow at residues G435–R474, N483–E523, S592–P634, K637–K675, P678–K717, Y721–K760, and I776–T807.

This sequence belongs to the WD repeat BOP1/ERB1 family. Component of the NOP7 complex, composed of ERB1, NOP7 and YTM1. The complex is held together by ERB1, which interacts with NOP7 via its N-terminal domain and with YTM1 via a high-affinity interaction between the seven-bladed beta-propeller domains of the 2 proteins. The NOP7 complex associates with the 66S pre-ribosome.

The protein localises to the nucleus. It localises to the nucleolus. The protein resides in the nucleoplasm. Its function is as follows. Component of the NOP7 complex, which is required for maturation of the 25S and 5.8S ribosomal RNAs and formation of the 60S ribosome. In Saccharomyces cerevisiae (strain YJM789) (Baker's yeast), this protein is Ribosome biogenesis protein ERB1.